A 475-amino-acid polypeptide reads, in one-letter code: Polyphosphate:AMP phosphotransferase (475 aa).

2 PPK2 regions span residues 18–222 and 256–472; these read LDLI…LTAL and ANYK…KADR.

The protein belongs to the polyphosphate kinase 2 (PPK2) family. Class II subfamily. As to quaternary structure, homodimer and homotetramer. It depends on Mg(2+) as a cofactor.

The catalysed reaction is [phosphate](n) + ADP = [phosphate](n+1) + AMP. Uses inorganic polyphosphate (polyP) as a donor to convert AMP to ADP. Can also use GMP, UMP, CMP, TMP or deoxyribonucleoside monophosphates, with lower efficiency. Cannot use low-molecular weight polyP as donors. Can also catalyze the synthesis of polyP from ADP or GDP, with lower efficiency. The sequence is that of Polyphosphate:AMP phosphotransferase from Acinetobacter johnsonii.